The primary structure comprises 219 residues: Thiopurine S-methyltransferase (219 aa).

S-adenosyl-L-methionine contacts are provided by Trp-10, Leu-45, Glu-66, and Arg-123.

It belongs to the class I-like SAM-binding methyltransferase superfamily. TPMT family.

The protein resides in the cytoplasm. It catalyses the reaction S-adenosyl-L-methionine + a thiopurine = S-adenosyl-L-homocysteine + a thiopurine S-methylether.. This Shewanella frigidimarina (strain NCIMB 400) protein is Thiopurine S-methyltransferase.